The following is a 252-amino-acid chain: Imidazole glycerol phosphate synthase subunit HisF (252 aa).

Catalysis depends on residues aspartate 11 and aspartate 130.

This sequence belongs to the HisA/HisF family. In terms of assembly, heterodimer of HisH and HisF.

It is found in the cytoplasm. The enzyme catalyses 5-[(5-phospho-1-deoxy-D-ribulos-1-ylimino)methylamino]-1-(5-phospho-beta-D-ribosyl)imidazole-4-carboxamide + L-glutamine = D-erythro-1-(imidazol-4-yl)glycerol 3-phosphate + 5-amino-1-(5-phospho-beta-D-ribosyl)imidazole-4-carboxamide + L-glutamate + H(+). It functions in the pathway amino-acid biosynthesis; L-histidine biosynthesis; L-histidine from 5-phospho-alpha-D-ribose 1-diphosphate: step 5/9. In terms of biological role, IGPS catalyzes the conversion of PRFAR and glutamine to IGP, AICAR and glutamate. The HisF subunit catalyzes the cyclization activity that produces IGP and AICAR from PRFAR using the ammonia provided by the HisH subunit. This is Imidazole glycerol phosphate synthase subunit HisF from Dictyoglomus thermophilum (strain ATCC 35947 / DSM 3960 / H-6-12).